The primary structure comprises 147 residues: Hemoglobin subunit beta-2 (147 aa).

The 145-residue stretch at 3 to 147 (HWTAEEKATI…LVAALSHGYF (145 aa)) folds into the Globin domain. H64 and H93 together coordinate heme b.

It belongs to the globin family. As to quaternary structure, heterotetramer of two alpha chains and two beta chains. As to expression, red blood cells.

Functionally, this is a larval (tadpole) beta-globin. The chain is Hemoglobin subunit beta-2 (hbb2) from Xenopus tropicalis (Western clawed frog).